The chain runs to 291 residues: Pantothenate synthetase (291 aa).

30–37 provides a ligand contact to ATP; sequence MGYLHVGH. Catalysis depends on histidine 37, which acts as the Proton donor. A (R)-pantoate-binding site is contributed by glutamine 61. Glutamine 61 is a binding site for beta-alanine. ATP is bound at residue 147–150; the sequence is GEKD. Glutamine 153 is a binding site for (R)-pantoate. ATP contacts are provided by residues valine 176 and 184-187; that span reads CSSR.

It belongs to the pantothenate synthetase family. In terms of assembly, homodimer.

It is found in the cytoplasm. The enzyme catalyses (R)-pantoate + beta-alanine + ATP = (R)-pantothenate + AMP + diphosphate + H(+). The protein operates within cofactor biosynthesis; (R)-pantothenate biosynthesis; (R)-pantothenate from (R)-pantoate and beta-alanine: step 1/1. Its function is as follows. Catalyzes the condensation of pantoate with beta-alanine in an ATP-dependent reaction via a pantoyl-adenylate intermediate. This Sinorhizobium medicae (strain WSM419) (Ensifer medicae) protein is Pantothenate synthetase.